Consider the following 206-residue polypeptide: Outer-membrane lipoprotein carrier protein (206 aa).

The signal sequence occupies residues 1–21; that stretch reads MKKLLCAVLLSPLLYSNAVLA.

Belongs to the LolA family. Monomer.

It localises to the periplasm. Functionally, participates in the translocation of lipoproteins from the inner membrane to the outer membrane. Only forms a complex with a lipoprotein if the residue after the N-terminal Cys is not an aspartate (The Asp acts as a targeting signal to indicate that the lipoprotein should stay in the inner membrane). This Shewanella oneidensis (strain ATCC 700550 / JCM 31522 / CIP 106686 / LMG 19005 / NCIMB 14063 / MR-1) protein is Outer-membrane lipoprotein carrier protein.